Reading from the N-terminus, the 429-residue chain is MIESERKQIIDLIKKEVIPAIGCTEPIAVALCVAKAAETLGMKPEKIEVLLSANILKNAMGVGIPGTDMVGLPIAVALGALIGRSEYQLEVLRDCTPEAVEQGKLFIAEKRICISLKEDITEKLYIEVICTAGSQKATAVIAGGHTTFVYIATDEKVLLDKQQTANEEEEDASLELNLRKVYDFALTSPLDEIRFILDTARLNKAAAEQAFKGNYGHSLGKMLRGTYEHKVMGDSVFSHILSYTSAACDARMAGAMIPVMSNSGSGNQGISATLPVVVFAEENGKTEEELIRALMLSHLTVIYIKQSLGRLSALCGCVVAATGSSCGITWLMGGNYNQVAFAVQNMIANLTGMICDGAKPSCALKVTTGVSTAVLSAMMAMEDRCVTSVEGIIDEDVDQSIRNLTRIGSQAMNETDKMVLDIMTHKGGC.

It belongs to the UPF0597 family.

This chain is UPF0597 protein BT_2080, found in Bacteroides thetaiotaomicron (strain ATCC 29148 / DSM 2079 / JCM 5827 / CCUG 10774 / NCTC 10582 / VPI-5482 / E50).